The primary structure comprises 262 residues: tRNA pseudouridine synthase A (262 aa).

The active-site Nucleophile is aspartate 52. Position 103 (tyrosine 103) interacts with substrate.

The protein belongs to the tRNA pseudouridine synthase TruA family.

The catalysed reaction is uridine(38/39/40) in tRNA = pseudouridine(38/39/40) in tRNA. Functionally, formation of pseudouridine at positions 38, 39 and 40 in the anticodon stem and loop of transfer RNAs. This chain is tRNA pseudouridine synthase A, found in Methanococcus maripaludis (strain C6 / ATCC BAA-1332).